A 352-amino-acid chain; its full sequence is Dof zinc finger protein DOF1.8 (352 aa).

A disordered region spans residues 24 to 46 (LKQQSNPPSPATPVERKARPEKD). A compositionally biased stretch (basic and acidic residues) spans 37–46 (VERKARPEKD). The segment at 49-103 (LNCPRCNSLNTKFCYYNNYSLTQPRYFCKDCRRYWTAGGSLRNIPVGGGVRKNKR) adopts a Dof-type zinc-finger fold. Residues Cys-51, Cys-54, Cys-76, and Cys-79 each coordinate Zn(2+). Disordered regions lie at residues 93–136 (PVGG…PLPH) and 265–334 (GGDP…VGFW). The span at 104 to 129 (SSSNSSSSSPSSSSSSKKPLFANNNT) shows a compositional bias: low complexity. The segment covering 310–323 (ENNDEHSDHEHEKE) has biased composition (basic and acidic residues).

Its subcellular location is the nucleus. Functionally, transcription factor that binds specifically to a 5'-AA[AG]G-3' consensus core sequence. In Arabidopsis thaliana (Mouse-ear cress), this protein is Dof zinc finger protein DOF1.8 (DOF1.8).